The chain runs to 225 residues: Protein-L-isoaspartate O-methyltransferase (225 aa).

The active site involves Ser-75.

It belongs to the methyltransferase superfamily. L-isoaspartyl/D-aspartyl protein methyltransferase family.

It localises to the cytoplasm. The enzyme catalyses [protein]-L-isoaspartate + S-adenosyl-L-methionine = [protein]-L-isoaspartate alpha-methyl ester + S-adenosyl-L-homocysteine. Catalyzes the methyl esterification of L-isoaspartyl residues in peptides and proteins that result from spontaneous decomposition of normal L-aspartyl and L-asparaginyl residues. It plays a role in the repair and/or degradation of damaged proteins. The protein is Protein-L-isoaspartate O-methyltransferase of Stenotrophomonas maltophilia (strain R551-3).